The chain runs to 68 residues: MPFINIKLVPENGGPTNEQKQQLIEGVSDLMVKVLNKNKASIVVIIDEVDSNNYGLGGESIHHLRQKN.

The Proton acceptor; via imino nitrogen role is filled by P2.

It belongs to the 4-oxalocrotonate tautomerase family.

The polypeptide is Probable tautomerase jhp_0858 (Helicobacter pylori (strain J99 / ATCC 700824) (Campylobacter pylori J99)).